We begin with the raw amino-acid sequence, 162 residues long: Phenazine biosynthesis protein PhzA2 (162 aa).

Belongs to the PhzA/PhzB family.

It participates in antibiotic biosynthesis; phenazine biosynthesis. In terms of biological role, involved in the biosynthesis of the antibiotic phenazine, a nitrogen-containing heterocyclic molecule having important roles in virulence, competition and biological control. PhzA2 (operon phzA2B2C2E2F2G2) has a role in the biosynthesis of the phenazine during both planktonic growth and biofilm development, and in host infection during biofilm development. This chain is Phenazine biosynthesis protein PhzA2, found in Pseudomonas aeruginosa (strain ATCC 15692 / DSM 22644 / CIP 104116 / JCM 14847 / LMG 12228 / 1C / PRS 101 / PAO1).